The following is a 664-amino-acid chain: Acetylcholinesterase (664 aa).

An N-terminal signal peptide occupies residues 1–29; it reads MFVNQRTRRPYMSVFVLVLGAAVICPAYG. Cys-95 and Cys-122 are disulfide-bonded. N-linked (GlcNAc...) asparagine glycosylation is present at Asn-117. The active-site Acyl-ester intermediate is the Ser-261. The cysteines at positions 315 and 330 are disulfide-linked. A glycan (N-linked (GlcNAc...) asparagine) is linked at Asn-316. Active-site charge relay system residues include Glu-390 and His-504. A disulfide bridge connects residues Cys-466 and Cys-588. A glycan (N-linked (GlcNAc...) asparagine) is linked at Asn-517. Asn-647 carries GPI-anchor amidated asparagine lipidation. Positions 648–664 are cleaved as a propeptide — removed in mature form; sequence KTPPHPQVILETRAFMH.

It belongs to the type-B carboxylesterase/lipase family. Homodimer; disulfide-linked.

The protein localises to the synapse. It is found in the cell membrane. The catalysed reaction is acetylcholine + H2O = choline + acetate + H(+). In terms of biological role, rapidly hydrolyzes choline released into the synapse. It can hydrolyze butyrylthiocholine. The protein is Acetylcholinesterase of Anopheles stephensi (Indo-Pakistan malaria mosquito).